The chain runs to 178 residues: Fatty-acid and retinol-binding protein 1 (178 aa).

Residues 1–16 (MYHQLILMALIGVIMA) form the signal peptide. N-linked (GlcNAc...) asparagine glycosylation is found at asparagine 44 and asparagine 75. Coiled-coil stretches lie at residues 67–89 (DAAL…ELRN) and 123–153 (KLDV…ELKA). The N-linked (GlcNAc...) asparagine glycan is linked to asparagine 157.

It belongs to the fatty-acid and retinol-binding protein (FARBP) family. In terms of processing, N-glycosylated.

Its subcellular location is the secreted. Functionally, binds retinol and different fatty acids. This Acanthocheilonema viteae (Filarial nematode worm) protein is Fatty-acid and retinol-binding protein 1.